The chain runs to 414 residues: Enolase (414 aa).

Residue Q162 participates in (2R)-2-phosphoglycerate binding. The active-site Proton donor is the E204. D239, E280, and D307 together coordinate Mg(2+). K332, R361, S362, and K383 together coordinate (2R)-2-phosphoglycerate. K332 functions as the Proton acceptor in the catalytic mechanism.

This sequence belongs to the enolase family. Requires Mg(2+) as cofactor.

It localises to the cytoplasm. The protein resides in the secreted. It is found in the cell surface. It carries out the reaction (2R)-2-phosphoglycerate = phosphoenolpyruvate + H2O. It functions in the pathway carbohydrate degradation; glycolysis; pyruvate from D-glyceraldehyde 3-phosphate: step 4/5. In terms of biological role, catalyzes the reversible conversion of 2-phosphoglycerate (2-PG) into phosphoenolpyruvate (PEP). It is essential for the degradation of carbohydrates via glycolysis. The protein is Enolase of Campylobacter jejuni (strain RM1221).